The following is a 543-amino-acid chain: Chaperonin GroEL (543 aa).

ATP-binding positions include 29–32 (TLGP), 86–90 (DGTTT), Gly413, 476–478 (NAA), and Asp492.

It belongs to the chaperonin (HSP60) family. In terms of assembly, forms a cylinder of 14 subunits composed of two heptameric rings stacked back-to-back. Interacts with the co-chaperonin GroES.

It localises to the cytoplasm. The enzyme catalyses ATP + H2O + a folded polypeptide = ADP + phosphate + an unfolded polypeptide.. Its function is as follows. Together with its co-chaperonin GroES, plays an essential role in assisting protein folding. The GroEL-GroES system forms a nano-cage that allows encapsulation of the non-native substrate proteins and provides a physical environment optimized to promote and accelerate protein folding. The protein is Chaperonin GroEL of Streptococcus pyogenes serotype M18 (strain MGAS8232).